The sequence spans 422 residues: Phosphoribosylamine--glycine ligase (422 aa).

Positions 107–314 (KAFMQRHGIP…LFDVLDRAID (208 aa)) constitute an ATP-grasp domain. 133-194 (VDREGAPIVI…EEFLAGEEAS (62 aa)) provides a ligand contact to ATP. Positions 284 and 286 each coordinate Mg(2+).

Belongs to the GARS family. It depends on Mg(2+) as a cofactor. Requires Mn(2+) as cofactor.

The catalysed reaction is 5-phospho-beta-D-ribosylamine + glycine + ATP = N(1)-(5-phospho-beta-D-ribosyl)glycinamide + ADP + phosphate + H(+). It participates in purine metabolism; IMP biosynthesis via de novo pathway; N(1)-(5-phospho-D-ribosyl)glycinamide from 5-phospho-alpha-D-ribose 1-diphosphate: step 2/2. This Ralstonia nicotianae (strain ATCC BAA-1114 / GMI1000) (Ralstonia solanacearum) protein is Phosphoribosylamine--glycine ligase.